A 293-amino-acid polypeptide reads, in one-letter code: Ribosomal RNA small subunit methyltransferase A (293 aa).

Residues Asn38, Val40, Gly65, Glu86, Asp116, and Asn135 each coordinate S-adenosyl-L-methionine.

This sequence belongs to the class I-like SAM-binding methyltransferase superfamily. rRNA adenine N(6)-methyltransferase family. RsmA subfamily.

Its subcellular location is the cytoplasm. It carries out the reaction adenosine(1518)/adenosine(1519) in 16S rRNA + 4 S-adenosyl-L-methionine = N(6)-dimethyladenosine(1518)/N(6)-dimethyladenosine(1519) in 16S rRNA + 4 S-adenosyl-L-homocysteine + 4 H(+). Functionally, specifically dimethylates two adjacent adenosines (A1518 and A1519) in the loop of a conserved hairpin near the 3'-end of 16S rRNA in the 30S particle. May play a critical role in biogenesis of 30S subunits. The chain is Ribosomal RNA small subunit methyltransferase A from Nocardia farcinica (strain IFM 10152).